Consider the following 123-residue polypeptide: Small ribosomal subunit protein uS12 (123 aa).

Position 89 is a 3-methylthioaspartic acid (aspartate 89). The interval 104 to 123 (TQGVKDRRQRRSKYGAKRPK) is disordered. Residues 110-123 (RRQRRSKYGAKRPK) are compositionally biased toward basic residues.

Belongs to the universal ribosomal protein uS12 family. Part of the 30S ribosomal subunit. Contacts proteins S8 and S17. May interact with IF1 in the 30S initiation complex.

With S4 and S5 plays an important role in translational accuracy. Functionally, interacts with and stabilizes bases of the 16S rRNA that are involved in tRNA selection in the A site and with the mRNA backbone. Located at the interface of the 30S and 50S subunits, it traverses the body of the 30S subunit contacting proteins on the other side and probably holding the rRNA structure together. The combined cluster of proteins S8, S12 and S17 appears to hold together the shoulder and platform of the 30S subunit. The polypeptide is Small ribosomal subunit protein uS12 (Parvibaculum lavamentivorans (strain DS-1 / DSM 13023 / NCIMB 13966)).